The chain runs to 308 residues: Elongation factor Ts (308 aa).

Residues 80 to 83 are involved in Mg(2+) ion dislocation from EF-Tu; that stretch reads TDFV.

It belongs to the EF-Ts family.

The protein resides in the cytoplasm. Associates with the EF-Tu.GDP complex and induces the exchange of GDP to GTP. It remains bound to the aminoacyl-tRNA.EF-Tu.GTP complex up to the GTP hydrolysis stage on the ribosome. The chain is Elongation factor Ts from Rhizobium rhizogenes (strain K84 / ATCC BAA-868) (Agrobacterium radiobacter).